The sequence spans 268 residues: TodF product hydratase (268 aa).

Belongs to the hydratase/decarboxylase family.

The protein operates within xenobiotic degradation; toluene degradation. Functionally, converts the product of 2-hydroxy-6-oxo-2,4-heptadienoate hydrolase. The sequence is that of TodF product hydratase (todJ) from Pseudomonas putida (strain ATCC 700007 / DSM 6899 / JCM 31910 / BCRC 17059 / LMG 24140 / F1).